We begin with the raw amino-acid sequence, 163 residues long: Nucleotide-binding protein YajQ (163 aa).

It belongs to the YajQ family.

Functionally, nucleotide-binding protein. The chain is Nucleotide-binding protein YajQ from Salmonella paratyphi A (strain ATCC 9150 / SARB42).